We begin with the raw amino-acid sequence, 146 residues long: Hemoglobin subunit beta (146 aa).

Residues 2-146 (QWTAEEKQLI…VAHALARKYH (145 aa)) form the Globin domain. His63 and His92 together coordinate heme b.

This sequence belongs to the globin family. In terms of assembly, heterotetramer of two alpha chains and two beta chains. As to expression, red blood cells.

In terms of biological role, involved in oxygen transport from the lung to the various peripheral tissues. This chain is Hemoglobin subunit beta (HBB), found in Rhea americana (Greater rhea).